The following is a 355-amino-acid chain: Small ribosomal subunit protein uS2 (355 aa).

Belongs to the universal ribosomal protein uS2 family.

This is Small ribosomal subunit protein uS2 from Methylorubrum extorquens (strain CM4 / NCIMB 13688) (Methylobacterium extorquens).